The sequence spans 420 residues: COP9 signalosome complex subunit 5 (420 aa).

The region spanning 73-208 is the MPN domain; that stretch reads AALSALACMK…IGAFRTMPET (136 aa). 3 residues coordinate Zn(2+): histidine 154, histidine 156, and aspartate 167. The JAMM motif motif lies at 154 to 167; sequence HSHPGYGCWLSGID.

This sequence belongs to the peptidase M67A family. CSN5 subfamily. Component of the COP9 signalosome (CSN) complex.

Its subcellular location is the cytoplasm. It localises to the nucleus. In terms of biological role, catalytic component of the COP9 signalosome (CSN) complex that acts as an regulator of the ubiquitin (Ubl) conjugation pathway by mediating the deneddylation of the cullin subunit of SCF-type E3 ubiquitin-protein ligase complexes. The CSN complex is involved in the regulation of the mating pheromone response. This is COP9 signalosome complex subunit 5 (RRI1) from Eremothecium gossypii (strain ATCC 10895 / CBS 109.51 / FGSC 9923 / NRRL Y-1056) (Yeast).